A 1357-amino-acid polypeptide reads, in one-letter code: MSYSFTEKKRIRKSFAKRASVLPIPFLLATQIESYAAFLQANLEPDQRAPEGLQAAFLSIFPIESHSRNARLDFVNYVLGAPPFDVKECQQRGLTYASPLRAKVRLTIMDKEASKPTVREVKEQEVYMGEIPLMTNTGSFVINGTERVIVSQLHRSPGVFFEHDRGKTHSSGKLLFSARIIPYRGSWLDFEFDPKDYLYFRVDRRRKMPITVLLKAIGYTPEQILENFFSFDSFHISRKSILFELLPERLRGDTARFDILSKSGKVIVQKDKRITVKHVREMQQAGIDRLEVPEDFLLGRVLGHNVVDKETGEILALANDEITETLLGKLRDANVEEIRTIYTNDLDQGAYISQTLKIDETADEMAAQVAIYRMMRPGEPPTEEAVKALFIGLFYAPERYDLSVVGRMKFNRRVGKTELDGPTTLSNEDIIAVIRILVELRNGRGEIDDIDHLGNRRVRSVGELAENQFRSGLVRVERAVKERLSQAESENLMPHDLINAKPVSAAVREFFGSSQLSQFMDQTNPLSEITHKRRVSALGPGGLTRERAGFEVRDVHPTHYGRVCPIETPEGPNIGLINSLALYAQTNEYGFMETPYRKVTDGLVTDEIHFLSAIEEGQYVIAQANAELDGDGRFTNDIVSCRHKNEFTLATPDRIEYMDVAPAQIVSVAASLIPFLEHDDANRALMGSNMQRQAVPCLRAEKPLVGTGIERVVAVDSGTAVKAVRGGVVDYVDASRIVVRVHDIETRAGEVGVDIYNLTKYTRSNQNTNINQRPLVKVGDVIARGDVVADGASTDKGELALGQNMLVAFMPWTGYNFEDSILISERIVANDRFTSIHIEELSVVSRDTKLGTEEITGDISNLSEAQLGRLDASGIVHIGAEVEAGDVLVGKVTPKGETQLTPEEKLLRAIFGEKASDVKDTSLRVPSGISGTVIDVQVFTREGIERDKRAQQIIDDELKRYKKDLADQMRIVEADAFVRIERLLIGKIATGGPKKLAKGATLTKEYLESIDPHHWFDIRLADEGASVQLEQIEEGLAQKRKAFDAAFEEKKKKLTQGDELPPGVQKMVKVYVAVKRRLQPGDKMAGRHGNKGVISKIVPVEDMPYMADGTPVDVVLNPLGVPSRMNVGQILETHLGWAAKGLGQKIGDMLRAGKEIVELRAFLDKIYNTSGKPEDIASLTDGEIADLAQNLQDGVPFATPVFDGATEQEIKDMLELAGLPRSGQVTLHDGRTGEAFDRPVTVGYMHVLKLHHLVDDKMHARSTGPYSLVTQQPLGGKAQFGGQRFGEMEVWALEAYGSAYTLQEMLTVKSDDVNGRTKVYESIVKGDHKIDAGMPESFNVLVKEIRSLAMDIDLERH.

This sequence belongs to the RNA polymerase beta chain family. In terms of assembly, the RNAP catalytic core consists of 2 alpha, 1 beta, 1 beta' and 1 omega subunit. When a sigma factor is associated with the core the holoenzyme is formed, which can initiate transcription.

It carries out the reaction RNA(n) + a ribonucleoside 5'-triphosphate = RNA(n+1) + diphosphate. In terms of biological role, DNA-dependent RNA polymerase catalyzes the transcription of DNA into RNA using the four ribonucleoside triphosphates as substrates. This chain is DNA-directed RNA polymerase subunit beta, found in Nitrosospira multiformis (strain ATCC 25196 / NCIMB 11849 / C 71).